The following is a 681-amino-acid chain: Proline dehydrogenase 1, mitochondrial (681 aa).

The N-terminal 30 residues, 1–30 (MALLRSLSAQRTAISLVYGRNSSKSSNSVA), are a transit peptide targeting the mitochondrion. A compositionally biased stretch (polar residues) spans 76–87 (STLVQPEVVSSE). Disordered stretches follow at residues 76–113 (STLVQPEVVSSETVKRSMKQESSQEKNPSPAGSPQRDP) and 216–239 (EEAEKREVESSVSSAGDKKEEGSM). A compositionally biased stretch (basic and acidic residues) spans 88 to 99 (TVKRSMKQESSQ).

This sequence belongs to the proline oxidase family. The cofactor is FAD. In terms of tissue distribution, most abundant in developing nervous system.

The protein localises to the mitochondrion matrix. It carries out the reaction L-proline + a quinone = (S)-1-pyrroline-5-carboxylate + a quinol + H(+). It functions in the pathway amino-acid degradation; L-proline degradation into L-glutamate; L-glutamate from L-proline: step 1/2. Functionally, converts proline to delta-1-pyrroline-5-carboxylate. Involved in the conversion of proline to glutamate, which functions as a transmitter at neuromuscular junctions. Glutamate deficiency could possibly account for reduced motor activity. This Drosophila melanogaster (Fruit fly) protein is Proline dehydrogenase 1, mitochondrial (slgA).